The chain runs to 180 residues: ATP-dependent protease subunit HslV (180 aa).

Residue Thr6 is part of the active site. Residues Ala164, Cys167, and Thr170 each coordinate Na(+).

This sequence belongs to the peptidase T1B family. HslV subfamily. A double ring-shaped homohexamer of HslV is capped on each side by a ring-shaped HslU homohexamer. The assembly of the HslU/HslV complex is dependent on binding of ATP.

Its subcellular location is the cytoplasm. The enzyme catalyses ATP-dependent cleavage of peptide bonds with broad specificity.. Allosterically activated by HslU binding. In terms of biological role, protease subunit of a proteasome-like degradation complex believed to be a general protein degrading machinery. The polypeptide is ATP-dependent protease subunit HslV (Borrelia duttonii (strain Ly)).